We begin with the raw amino-acid sequence, 165 residues long: Type 3 secretion system regulator YopR (165 aa).

Residues Thr-2–Thr-11 form a 5' secretion signal region. The segment at Pro-131–Ser-149 is 3' secretion signal.

It belongs to the YopR family.

It localises to the secreted. May be involved in the regulation of the assembly of the type III secretion system (T3SS), also called injectisome, which is used to inject bacterial effector proteins into eukaryotic host cells. May control the secretion and/or polymerization of YscF/SctF, the principal component of the needle filament, thereby impacting the assembly of the T3SS. Involved in pathogenesis. Essential for the establishment of Yersinia infections in a mouse model system. The protein is Type 3 secretion system regulator YopR of Yersinia enterocolitica.